We begin with the raw amino-acid sequence, 314 residues long: UPF0761 membrane protein VIBHAR_00593 (314 aa).

6 helical membrane passes run 41–61 (YLAYITLLSIVPMLTVLLSIL), 104–124 (MTAVGGAFLFVAALMLISNID), 143–163 (FSMYWMVLTLGPILVGASIAV), 185–205 (FLRWLPLLLSFFAFMGLYFLV), 217–237 (IGAAIAAVLFELSKKGFAFYI), and 249–269 (ALAAIPILFVWVYLCWLIVLI).

It belongs to the UPF0761 family.

Its subcellular location is the cell inner membrane. The polypeptide is UPF0761 membrane protein VIBHAR_00593 (Vibrio campbellii (strain ATCC BAA-1116)).